The chain runs to 834 residues: Dual specificity calcium/calmodulin-dependent 3',5'-cyclic nucleotide phosphodiesterase 1 (834 aa).

Positions 152 to 338 (HSHGRDDQQQ…DELSEVQPDA (187 aa)) are disordered. Residues 207–222 (THSGPTGPPSNTSSET) show a composition bias toward low complexity. The span at 236–252 (TVRESVMEESPSKDPGD) shows a compositional bias: basic and acidic residues. A compositionally biased stretch (low complexity) spans 260-301 (STSTLTSQTTTSSSATAEPSAKAAESQAGSAGSSGSCSNPAA). Residues 313 to 322 (WARSMSTNKT) show a composition bias toward polar residues. The tract at residues 364–387 (EKPKFRSVAHAIRAGIFVDRMYRR) is calmodulin-binding. Residues 392 to 786 (ALTAFPPDVV…RIWKEQAVKD (395 aa)) form the PDEase domain. Histidine 469 acts as the Proton donor in catalysis. Zn(2+) is bound by residues histidine 473, histidine 509, aspartate 510, and aspartate 617. Aspartate 510 is a Mg(2+) binding site. Disordered regions lie at residues 720–744 (IVIPNSGITPSMDKPRDHRTEAKTT) and 797–834 (EEAAAAAAAEAEESKPETETADGEQSEPAAEPADGAAA). Positions 732–741 (DKPRDHRTEA) are enriched in basic and acidic residues. Over residues 823-834 (EPAAEPADGAAA) the composition is skewed to low complexity.

This sequence belongs to the cyclic nucleotide phosphodiesterase family. PDE1 subfamily. Zn(2+) serves as cofactor. Mg(2+) is required as a cofactor. As to expression, expressed in the head (at protein level). Expressed in Malpighian tubules. Expressed in neurons in the brain and ventral ganglia with male flies having higher levels of expression in the abdominal ganglia compared to female flies.

The enzyme catalyses a nucleoside 3',5'-cyclic phosphate + H2O = a nucleoside 5'-phosphate + H(+). It carries out the reaction 3',5'-cyclic GMP + H2O = GMP + H(+). It catalyses the reaction 3',5'-cyclic AMP + H2O = AMP + H(+). With respect to regulation, type I PDE are activated by the binding of calmodulin in the presence of Ca(2+). Inhibited by zaprinast and sildenafil. In terms of biological role, cyclic nucleotide phosphodiesterase with a dual specificity for the second messengers cAMP and cGMP, which are key regulators of many important physiological processes. Required for male fertility and male mating behavior. The sequence is that of Dual specificity calcium/calmodulin-dependent 3',5'-cyclic nucleotide phosphodiesterase 1 from Drosophila melanogaster (Fruit fly).